The following is an 89-amino-acid chain: Small ribosomal subunit protein uS15 (89 aa).

This sequence belongs to the universal ribosomal protein uS15 family. As to quaternary structure, part of the 30S ribosomal subunit. Forms a bridge to the 50S subunit in the 70S ribosome, contacting the 23S rRNA.

Functionally, one of the primary rRNA binding proteins, it binds directly to 16S rRNA where it helps nucleate assembly of the platform of the 30S subunit by binding and bridging several RNA helices of the 16S rRNA. Forms an intersubunit bridge (bridge B4) with the 23S rRNA of the 50S subunit in the ribosome. The sequence is that of Small ribosomal subunit protein uS15 from Caulobacter vibrioides (strain NA1000 / CB15N) (Caulobacter crescentus).